The chain runs to 156 residues: Cyclic pyranopterin monophosphate synthase (156 aa).

Substrate is bound by residues 73 to 75 (LCH) and 110 to 111 (ME). Residue aspartate 125 is part of the active site.

The protein belongs to the MoaC family. As to quaternary structure, homohexamer; trimer of dimers.

It carries out the reaction (8S)-3',8-cyclo-7,8-dihydroguanosine 5'-triphosphate = cyclic pyranopterin phosphate + diphosphate. It participates in cofactor biosynthesis; molybdopterin biosynthesis. In terms of biological role, catalyzes the conversion of (8S)-3',8-cyclo-7,8-dihydroguanosine 5'-triphosphate to cyclic pyranopterin monophosphate (cPMP). In Pseudomonas putida (strain W619), this protein is Cyclic pyranopterin monophosphate synthase.